A 570-amino-acid polypeptide reads, in one-letter code: Proline--tRNA ligase (570 aa).

It belongs to the class-II aminoacyl-tRNA synthetase family. ProS type 1 subfamily. Homodimer.

Its subcellular location is the cytoplasm. The catalysed reaction is tRNA(Pro) + L-proline + ATP = L-prolyl-tRNA(Pro) + AMP + diphosphate. In terms of biological role, catalyzes the attachment of proline to tRNA(Pro) in a two-step reaction: proline is first activated by ATP to form Pro-AMP and then transferred to the acceptor end of tRNA(Pro). As ProRS can inadvertently accommodate and process non-cognate amino acids such as alanine and cysteine, to avoid such errors it has two additional distinct editing activities against alanine. One activity is designated as 'pretransfer' editing and involves the tRNA(Pro)-independent hydrolysis of activated Ala-AMP. The other activity is designated 'posttransfer' editing and involves deacylation of mischarged Ala-tRNA(Pro). The misacylated Cys-tRNA(Pro) is not edited by ProRS. This is Proline--tRNA ligase from Clostridium acetobutylicum (strain ATCC 824 / DSM 792 / JCM 1419 / IAM 19013 / LMG 5710 / NBRC 13948 / NRRL B-527 / VKM B-1787 / 2291 / W).